A 96-amino-acid polypeptide reads, in one-letter code: Class I hydrophobin 2 (96 aa).

The N-terminal stretch at 1–15 (MFKALIVALAAVAAA) is a signal peptide. 4 disulfides stabilise this stretch: C28-C77, C34-C71, C35-C55, and C78-C91.

It belongs to the fungal hydrophobin family.

Its subcellular location is the secreted. The protein localises to the cell wall. Its function is as follows. Aerial growth, conidiation, and dispersal of filamentous fungi in the environment rely upon a capability of their secreting small amphipathic proteins called hydrophobins (HPBs) with low sequence identity. Class I can self-assemble into an outermost layer of rodlet bundles on aerial cell surfaces, conferring cellular hydrophobicity that supports fungal growth, development and dispersal; whereas Class II form highly ordered films at water-air interfaces through intermolecular interactions but contribute nothing to the rodlet structure. Hyd2 plays a neglectable role in hyphal growth and asexual development and does not seem involved in cellular hydrophobicity, conidial adhesion, stress tolerance nor insect pathogenicity. The protein is Class I hydrophobin 2 of Metarhizium robertsii (strain ARSEF 23 / ATCC MYA-3075) (Metarhizium anisopliae (strain ARSEF 23)).